The sequence spans 806 residues: Transitional endoplasmic reticulum ATPase (806 aa).

N-acetylalanine is present on alanine 2. Serine 3 and serine 7 each carry phosphoserine. Lysine 8 is covalently cross-linked (Glycyl lysine isopeptide (Lys-Gly) (interchain with G-Cter in SUMO2)). Serine 13 is subject to Phosphoserine. Lysine 18 participates in a covalent cross-link: Glycyl lysine isopeptide (Lys-Gly) (interchain with G-Cter in SUMO2). Serine 37 is modified (phosphoserine). An ATP-binding site is contributed by 247-253 (PGTGKTL). Lysine 315 carries the post-translational modification N6,N6,N6-trimethyllysine; by VCPKMT. The ATP site is built by asparagine 348 and histidine 384. The residue at position 436 (threonine 436) is a Phosphothreonine. Serine 462 carries the post-translational modification Phosphoserine. Residues lysine 502 and lysine 505 each carry the N6-acetyllysine modification. 521–526 (GCGKTL) lines the ATP pocket. Lysine 668 is modified (N6-acetyllysine; alternate). Lysine 668 is modified (N6-succinyllysine; alternate). Serine 702 is modified (phosphoserine). A disordered region spans residues 708–727 (RRERERQTNPSAMEVEEDDP). The residue at position 754 (lysine 754) is an N6-acetyllysine. The interval 768 to 806 (FGSFRFPSGNQGGAGPSQGSGGGTGGNVYTEDNDDDLYG) is disordered. Phosphoserine occurs at positions 770, 775, and 787. The span at 777–793 (NQGGAGPSQGSGGGTGG) shows a compositional bias: gly residues. Positions 797 to 806 (TEDNDDDLYG) are interaction with UBXN6. Positions 802–806 (DDLYG) match the PIM motif motif. Residue tyrosine 805 is modified to Phosphotyrosine.

Belongs to the AAA ATPase family. In terms of assembly, homohexamer. Forms a ring-shaped particle of 12.5 nm diameter, that displays 6-fold radial symmetry. Part of a ternary complex containing STX5A, NSFL1C and VCP. NSFL1C forms a homotrimer that binds to one end of a VCP homohexamer. The complex binds to membranes enriched in phosphatidylethanolamine-containing lipids and promotes Golgi membrane fusion. Binds to a heterodimer of NPLOC4 and UFD1, binding to this heterodimer inhibits Golgi-membrane fusion. Interaction with VCIP135 leads to dissociation of the complex via ATP hydrolysis by VCP. Part of a ternary complex containing NPLOC4, UFD1 and VCP. Interacts with NSFL1C-like protein p37; the complex has membrane fusion activity and is required for Golgi and endoplasmic reticulum biogenesis. Interacts with SELENOS and SYVN1, as well as with DERL1 (via SHP-box motif), DERL2 and DERL3; which probably transfer misfolded proteins from the ER to VCP. Interacts with SVIP and DERL1. Component of a complex required to couple retrotranslocation, ubiquitination and deglycosylation composed of NGLY1, SAKS1, AMFR, VCP and RAD23B. Part of a complex composed of STUB1/CHIP, VCP/p97, CHRNA3, and UBXN2A that modulates the ubiquitination and endoplasmic reticulum-associated degradation (ERAD) of CHRNA3. Within the complex UBXN2A acts as a scaffold protein required for the interaction of CHRNA3 with VCP/p97, this interaction also inhibits CHRNA3 ubiquitination by STUB1/CHIP and subsequently ERAD. Interacts with UBXN2A (via UBX domain); the interaction is required for the interaction of CHRNA3 in the STUB1-VCP-UBXN2A complex. Directly interacts with UBXN4 and RNF19A. Interacts with CASR. Interacts with UBE4B and YOD1. Interacts with clathrin. Interacts with RNF103. Interacts with TRIM13 and TRIM21. Component of a VCP/p97-AMFR/gp78 complex that participates in the final step of the endoplasmic reticulum-associated degradation (ERAD) of HMGCR. Interacts directly with AMFR/gp78 (via its VIM). Interacts with RHBDD1 (via C-terminal domain). Interacts with SPRTN; leading to recruitment to stalled replication forks. Interacts with WASHC5. Interacts with UBOX5. Interacts (via N-terminus) with UBXN7, UBXN8, and probably several other UBX domain-containing proteins (via UBX domains); the interactions are mutually exclusive with VIM-dependent interactions such as those with AMFR and SELENOS. Forms a complex with UBQLN1 and UBXN4. Interacts (via the PIM motif) with RNF31 (via the PUB domain). Interacts with RIGI and RNF125; interaction takes place when RIGI is ubiquitinated via 'Lys-63'-linked ubiquitin on its CARD domains, leading to recruit RNF125 and promote ubiquitination and degradation of RIGI. Interacts with BAG6. Interacts with UBXN10. Interacts with UBXN6; the interaction with UBXN6 is direct and competitive with UFD1. Forms a ternary complex with CAV1 and UBXN6. Interacts with PLAA, UBXN6 and YOD1; may form a complex involved in macroautophagy. Interacts with ANKZF1. Interacts with ubiquitin-binding protein FAF1. Interacts with ZFAND2B (via VIM motif); the interaction is direct. Interacts with ZFAND1 (via its ubiquitin-like region); this interaction occurs in an arsenite-dependent manner. Interacts with CCDC47. Interacts with LMBR1L and UBAC2. Interacts with ATXN3. Interacts with TEX264; bridging VCP to covalent DNA-protein cross-links (DPCs). ISGylated. In terms of processing, methylation at Lys-315 catalyzed by VCPKMT is increased in the presence of ASPSCR1. Lys-315 methylation may decrease ATPase activity. Post-translationally, phosphorylated by tyrosine kinases in response to T-cell antigen receptor activation. Phosphorylated in mitotic cells.

Its subcellular location is the cytoplasm. It is found in the cytosol. The protein resides in the endoplasmic reticulum. The protein localises to the nucleus. It localises to the stress granule. It catalyses the reaction ATP + H2O = ADP + phosphate + H(+). In terms of biological role, necessary for the fragmentation of Golgi stacks during mitosis and for their reassembly after mitosis. Involved in the formation of the transitional endoplasmic reticulum (tER). The transfer of membranes from the endoplasmic reticulum to the Golgi apparatus occurs via 50-70 nm transition vesicles which derive from part-rough, part-smooth transitional elements of the endoplasmic reticulum (tER). Vesicle budding from the tER is an ATP-dependent process. The ternary complex containing UFD1, VCP and NPLOC4 binds ubiquitinated proteins and is necessary for the export of misfolded proteins from the ER to the cytoplasm, where they are degraded by the proteasome. The NPLOC4-UFD1-VCP complex regulates spindle disassembly at the end of mitosis and is necessary for the formation of a closed nuclear envelope. Regulates E3 ubiquitin-protein ligase activity of RNF19A. Component of the VCP/p97-AMFR/gp78 complex that participates in the final step of the sterol-mediated ubiquitination and endoplasmic reticulum-associated degradation (ERAD) of HMGCR. Mediates the endoplasmic reticulum-associated degradation of CHRNA3 in cortical neurons as part of the STUB1-VCP-UBXN2A complex. Involved in endoplasmic reticulum stress-induced pre-emptive quality control, a mechanism that selectively attenuates the translocation of newly synthesized proteins into the endoplasmic reticulum and reroutes them to the cytosol for proteasomal degradation. Involved in clearance process by mediating G3BP1 extraction from stress granules. Also involved in DNA damage response: recruited to double-strand breaks (DSBs) sites in a RNF8- and RNF168-dependent manner and promotes the recruitment of TP53BP1 at DNA damage sites. Recruited to stalled replication forks by SPRTN: may act by mediating extraction of DNA polymerase eta (POLH) to prevent excessive translesion DNA synthesis and limit the incidence of mutations induced by DNA damage. Together with SPRTN metalloprotease, involved in the repair of covalent DNA-protein cross-links (DPCs) during DNA synthesis. Involved in interstrand cross-link repair in response to replication stress by mediating unloading of the ubiquitinated CMG helicase complex. Mediates extraction of PARP1 trapped to chromatin: recognizes and binds ubiquitinated PARP1 and promotes its removal. Required for cytoplasmic retrotranslocation of stressed/damaged mitochondrial outer-membrane proteins and their subsequent proteasomal degradation. Essential for the maturation of ubiquitin-containing autophagosomes and the clearance of ubiquitinated protein by autophagy. Acts as a negative regulator of type I interferon production by interacting with RIGI: interaction takes place when RIGI is ubiquitinated via 'Lys-63'-linked ubiquitin on its CARD domains, leading to recruit RNF125 and promote ubiquitination and degradation of RIGI. May play a role in the ubiquitin-dependent sorting of membrane proteins to lysosomes where they undergo degradation. May more particularly play a role in caveolins sorting in cells. By controlling the steady-state expression of the IGF1R receptor, indirectly regulates the insulin-like growth factor receptor signaling pathway. This Bos taurus (Bovine) protein is Transitional endoplasmic reticulum ATPase (VCP).